Consider the following 232-residue polypeptide: Enterobactin synthase component D (232 aa).

Aspartate 106, glutamate 108, and glutamate 150 together coordinate Mg(2+).

This sequence belongs to the P-Pant transferase superfamily. EntD family. As to quaternary structure, entB, EntD, EntE, and EntF form a multienzyme complex called enterobactin synthase. The cofactor is Mg(2+).

The protein resides in the membrane. It catalyses the reaction apo-[aryl-carrier protein] + CoA = holo-[aryl-carrier protein] + adenosine 3',5'-bisphosphate + H(+). It carries out the reaction apo-[peptidyl-carrier protein] + CoA = holo-[peptidyl-carrier protein] + adenosine 3',5'-bisphosphate + H(+). Its pathway is siderophore biosynthesis; enterobactin biosynthesis. Involved in the biosynthesis of the siderophore enterobactin (enterochelin), which is a macrocyclic trimeric lactone of N-(2,3-dihydroxybenzoyl)-serine. The serine trilactone serves as a scaffolding for the three catechol functionalities that provide hexadentate coordination for the tightly ligated iron(2+) atoms. Plays an essential role in the assembly of the enterobactin by catalyzing the transfer of the 4'-phosphopantetheine (Ppant) moiety from coenzyme A to the apo-domains of both EntB (ArCP domain) and EntF (PCP domain) to yield their holo-forms which make them competent for the activation of 2,3-dihydroxybenzoate (DHB) and L-serine, respectively. This chain is Enterobactin synthase component D, found in Salmonella austin.